We begin with the raw amino-acid sequence, 79 residues long: Probable 26S proteasome complex subunit sem1 (79 aa).

Residues 1–21 (MSAPDKEKEKEKEETNNKSED) are compositionally biased toward basic and acidic residues. Residues 1–30 (MSAPDKEKEKEKEETNNKSEDLGLLEEDDE) are disordered. S19 bears the Phosphoserine mark.

The protein belongs to the DSS1/SEM1 family. In terms of assembly, part of the 26S proteasome.

In terms of biological role, subunit of the 26S proteasome which plays a role in ubiquitin-dependent proteolysis. The chain is Probable 26S proteasome complex subunit sem1 from Drosophila melanogaster (Fruit fly).